Reading from the N-terminus, the 146-residue chain is ATP synthase epsilon chain (146 aa).

It belongs to the ATPase epsilon chain family. As to quaternary structure, F-type ATPases have 2 components, CF(1) - the catalytic core - and CF(0) - the membrane proton channel. CF(1) has five subunits: alpha(3), beta(3), gamma(1), delta(1), epsilon(1). CF(0) has three main subunits: a, b and c.

It is found in the cell membrane. Its function is as follows. Produces ATP from ADP in the presence of a proton gradient across the membrane. The sequence is that of ATP synthase epsilon chain from Lactobacillus delbrueckii subsp. bulgaricus (strain ATCC 11842 / DSM 20081 / BCRC 10696 / JCM 1002 / NBRC 13953 / NCIMB 11778 / NCTC 12712 / WDCM 00102 / Lb 14).